The sequence spans 303 residues: MSHFGRSGPPDISDTYSLLVLNITFRTTADDLYPLFAKYGKVVDVFIPRDRRTGDSRGFAFVRYKYKDEAHKAVERLDGRVVDGREITVQFAKYGPNAEKISKGRVVEPPPKSRRSRSRSPRRSRSPRRSRSPPRRRSPRRSRSPRRRSRDDYREKDYRKRSRSRSYDRRERHEEKDRDHRRRTRSRSASPDEKRRVRGRYDNESRSHSRSLSASPARRSPRSSSPQKTSPAREVSPDKRSNERSPSPRRSLSPRSPALQKASPSKEMSPERRSNERSPSPGSPAPLRKVDAASRSQSPYAAE.

Ser-7 carries the post-translational modification Phosphoserine. The 79-residue stretch at 16-94 folds into the RRM domain; that stretch reads YSLLVLNITF…REITVQFAKY (79 aa). The interval 100 to 303 is disordered; sequence KISKGRVVEP…SRSQSPYAAE (204 aa). Residues 112-148 show a composition bias toward basic residues; sequence KSRRSRSRSPRRSRSPRRSRSPPRRRSPRRSRSPRRR. Composition is skewed to basic and acidic residues over residues 149 to 158 and 165 to 178; these read SRDDYREKDY and RSYD…EKDR. Residues Ser-186 and Ser-188 each carry the phosphoserine modification. Over residues 190–207 the composition is skewed to basic and acidic residues; the sequence is SPDEKRRVRGRYDNESRS. Low complexity-rich tracts occupy residues 210 to 226 and 244 to 257; these read RSLS…SSSP and RSPS…PRSP. Phosphoserine is present on residues Ser-251, Ser-253, Ser-256, Ser-263, Ser-278, Ser-280, Ser-283, Ser-296, and Ser-298. Residues 294–303 show a composition bias toward polar residues; that stretch reads SRSQSPYAAE.

This sequence belongs to the splicing factor SR family. SC subfamily. In terms of assembly, component of the spliceosome. Interacts with SNRNP35, CYP59 and RS2Z33.

The protein resides in the nucleus speckle. Its function is as follows. Probably involved in intron recognition and spliceosome assembly, but not involved in alternative splicing regulation of the SCL33 intron. The protein is Serine/arginine-rich splicing factor SC35 (SC35) of Arabidopsis thaliana (Mouse-ear cress).